Consider the following 433-residue polypeptide: MSAENQEELLDYSDSEEIAVPTTTQAGEGESANDKEADKKGSYVGIHATGFRDFLLKPELLRAIGDCGFEHPSEVQQVCIPQSILGTDVLCQAKSGLGKTAVFVLSTLQQLDPVAGEISTLVICHTRELAYQIRNEYARFSKYMPDVKTEVFYGGTPVKRDIEKLKNKDTCPHIVVATPGRLHALVQEKAIRLNNVKSFVIDECDKVLESLDMRRDVQDIFRATPHQKQVMMFSATLSQDIRPVCKKFMQNPLEIYVDDEAKLTLHGLQQYYIKLEEKEKNRKLSDLLDSLEFNQVIIFVKSTQRANELNKLLCACNFPSIAVHSGLPQEERIERYKSFKEFNKRICVSTDVFGRGIDIERINLAINYDLPNEADQYLHRVGRAGRFGTKGLGISFVSTKEDEEVLEKIQSRFDVKITEFPEEGVDPSTYMNT.

Positions 1–17 are enriched in acidic residues; sequence MSAENQEELLDYSDSEE. Positions 1–39 are disordered; it reads MSAENQEELLDYSDSEEIAVPTTTQAGEGESANDKEADK. Positions 49–77 match the Q motif motif; sequence TGFRDFLLKPELLRAIGDCGFEHPSEVQQ. The region spanning 80–255 is the Helicase ATP-binding domain; the sequence is IPQSILGTDV…KKFMQNPLEI (176 aa). 93-100 provides a ligand contact to ATP; the sequence is AKSGLGKT. Positions 202-205 match the DEAD box motif; the sequence is DECD. The 162-residue stretch at 267–428 folds into the Helicase C-terminal domain; it reads GLQQYYIKLE…EFPEEGVDPS (162 aa).

The protein belongs to the DEAD box helicase family. DECD subfamily.

It is found in the nucleus. It carries out the reaction ATP + H2O = ADP + phosphate + H(+). Functionally, ATP-binding RNA helicase involved in transcription elongation and required for the export of mRNA out of the nucleus. SUB2 also plays a role in pre-mRNA splicing and spliceosome assembly. May be involved in rDNA and telomeric silencing, and maintenance of genome integrity. The protein is ATP-dependent RNA helicase SUB2 (SUB2) of Lodderomyces elongisporus (strain ATCC 11503 / CBS 2605 / JCM 1781 / NBRC 1676 / NRRL YB-4239) (Yeast).